The chain runs to 211 residues: tRNA (guanine-N(7)-)-methyltransferase (211 aa).

E44, D69, D96, and D118 together coordinate S-adenosyl-L-methionine. D118 is an active-site residue. K122 serves as a coordination point for substrate. The interval 124 to 129 (RHEKRR) is interaction with RNA. Substrate contacts are provided by residues D154 and 191–194 (TEYE).

Belongs to the class I-like SAM-binding methyltransferase superfamily. TrmB family.

The enzyme catalyses guanosine(46) in tRNA + S-adenosyl-L-methionine = N(7)-methylguanosine(46) in tRNA + S-adenosyl-L-homocysteine. Its pathway is tRNA modification; N(7)-methylguanine-tRNA biosynthesis. Catalyzes the formation of N(7)-methylguanine at position 46 (m7G46) in tRNA. The sequence is that of tRNA (guanine-N(7)-)-methyltransferase from Streptococcus equi subsp. zooepidemicus (strain MGCS10565).